Here is a 318-residue protein sequence, read N- to C-terminus: Protein teg (318 aa).

In terms of domain architecture, PNPLA spans 7–182; sequence ITFDGGGTLG…VATNTSTASI (176 aa). Residues 11-16 carry the GXGXXG motif; the sequence is GGGTLG. Positions 42–46 match the GXSXG motif; that stretch reads GNSIG. The active-site Nucleophile is Ser-44. The Proton acceptor role is filled by Asp-169.

Probable lipid hydrolase. The chain is Protein teg (teg) from Priestia megaterium (strain ATCC 14581 / DSM 32 / CCUG 1817 / JCM 2506 / NBRC 15308 / NCIMB 9376 / NCTC 10342 / NRRL B-14308 / VKM B-512 / Ford 19) (Bacillus megaterium).